The chain runs to 398 residues: Acetate kinase (398 aa).

N8 provides a ligand contact to Mg(2+). K15 contributes to the ATP binding site. R89 lines the substrate pocket. The active-site Proton donor/acceptor is D146. Residues 206-210, 283-285, and 331-335 contribute to the ATP site; these read HIGNG, DMR, and GMGEN. E383 is a binding site for Mg(2+).

Belongs to the acetokinase family. Homodimer. Mg(2+) is required as a cofactor. It depends on Mn(2+) as a cofactor.

Its subcellular location is the cytoplasm. The enzyme catalyses acetate + ATP = acetyl phosphate + ADP. The protein operates within metabolic intermediate biosynthesis; acetyl-CoA biosynthesis; acetyl-CoA from acetate: step 1/2. Functionally, catalyzes the formation of acetyl phosphate from acetate and ATP. Can also catalyze the reverse reaction. This is Acetate kinase from Streptococcus pyogenes serotype M2 (strain MGAS10270).